A 93-amino-acid polypeptide reads, in one-letter code: Integration host factor subunit beta (93 aa).

This sequence belongs to the bacterial histone-like protein family. As to quaternary structure, heterodimer of an alpha and a beta chain.

Functionally, this protein is one of the two subunits of integration host factor, a specific DNA-binding protein that functions in genetic recombination as well as in transcriptional and translational control. The protein is Integration host factor subunit beta of Cereibacter sphaeroides (strain KD131 / KCTC 12085) (Rhodobacter sphaeroides).